The sequence spans 488 residues: Multidrug resistance outer membrane protein MdtP (488 aa).

The N-terminal stretch at 1–23 (MINRQLSRLLLCSILGSTTLISG) is a signal peptide. A lipid anchor (N-palmitoyl cysteine) is attached at cysteine 24. Cysteine 24 carries S-diacylglycerol cysteine lipidation.

The protein belongs to the outer membrane factor (OMF) (TC 1.B.17) family. Could be part of a tripartite efflux system composed of MdtN, MdtO and MdtP.

Its subcellular location is the cell outer membrane. Could be involved in resistance to puromycin, acriflavine and tetraphenylarsonium chloride. This Escherichia coli O6:H1 (strain CFT073 / ATCC 700928 / UPEC) protein is Multidrug resistance outer membrane protein MdtP (mdtP).